A 284-amino-acid polypeptide reads, in one-letter code: Bifunctional protein FolD (284 aa).

NADP(+)-binding positions include 165 to 167 (GRS), Ser190, and Val231.

The protein belongs to the tetrahydrofolate dehydrogenase/cyclohydrolase family. In terms of assembly, homodimer.

The enzyme catalyses (6R)-5,10-methylene-5,6,7,8-tetrahydrofolate + NADP(+) = (6R)-5,10-methenyltetrahydrofolate + NADPH. The catalysed reaction is (6R)-5,10-methenyltetrahydrofolate + H2O = (6R)-10-formyltetrahydrofolate + H(+). Its pathway is one-carbon metabolism; tetrahydrofolate interconversion. Its function is as follows. Catalyzes the oxidation of 5,10-methylenetetrahydrofolate to 5,10-methenyltetrahydrofolate and then the hydrolysis of 5,10-methenyltetrahydrofolate to 10-formyltetrahydrofolate. The polypeptide is Bifunctional protein FolD (Ruminiclostridium cellulolyticum (strain ATCC 35319 / DSM 5812 / JCM 6584 / H10) (Clostridium cellulolyticum)).